Reading from the N-terminus, the 406-residue chain is LIM/homeobox protein Lhx1 (406 aa).

LIM zinc-binding domains follow at residues 4–54 and 63–117; these read CAGC…CKND and CAGC…CKED. 2 disordered regions span residues 128 to 189 and 294 to 372; these read NSLH…TIKA and DFFP…SAEV. Residues 137-148 show a composition bias toward low complexity; sequence SDPSLSPDSQDP. Positions 151–167 are enriched in basic and acidic residues; the sequence is DDAKDSESANVSDKEGG. The residue at position 162 (Ser162) is a Phosphoserine. A DNA-binding region (homeobox) is located at residues 180–239; it reads RRGPRTTIKAKQLETLKAAFAATPKPTRHIREQLAQETGLNMRVIQVWFQNRRSKERRMK. Low complexity predominate over residues 315-327; that stretch reads PSSGPSGTPLGGL. Residues 352 to 362 show a composition bias toward pro residues; the sequence is GDSPSPEPSLP.

In terms of assembly, interacts with LDB1 via the tandem LIM domains.

It localises to the nucleus. Functionally, potential transcription factor. May play a role in early mesoderm formation and later in lateral mesoderm differentiation and neurogenesis. The protein is LIM/homeobox protein Lhx1 (Lhx1) of Mesocricetus auratus (Golden hamster).